Consider the following 1090-residue polypeptide: Protein transport protein Sec24A (1090 aa).

Disordered stretches follow at residues 1 to 260 (MAQP…AHNT) and 272 to 325 (TPQL…TQTP). Over residues 8–28 (AARGAAASLQAQNGAASASGS) the composition is skewed to low complexity. Composition is skewed to polar residues over residues 29–55 (PYTN…SQPP), 138–151 (WQYN…QTNH), and 162–184 (GNPN…QTSF). The span at 194–236 (QNPPLPPTFQPGAPPGPPPAGGPPPSRGPAPQKTPPRAAPPPS) shows a compositional bias: pro residues. Polar residues-rich tracts occupy residues 237–258 (FNSA…TAAH), 274–286 (QLVN…SRSV), and 313–325 (SYPS…TQTP). Residues cysteine 428, cysteine 431, cysteine 449, and cysteine 452 each contribute to the Zn(2+) site. A zinc finger-like region spans residues 428–452 (CRSCRTYINPFVNFLDQRRWKCNLC). The stretch at 963 to 1036 (PQPPILQLSV…PESARIAAFI (74 aa)) is one Gelsolin-like repeat.

Belongs to the SEC23/SEC24 family. SEC24 subfamily. As to quaternary structure, COPII is composed of at least five proteins: the Sec23/24 complex, the Sec13/31 complex and Sar1. Interacts with TMED2. Interacts (as part of the Sec23/24 complex) with SEC22B; recruits SEC22B into COPII-coated vesicles for its transport from the endoplasmic reticulum to the Golgi. Interacts with STING1; promoting STING1 translocation to COPII vesicles in a STEEP1-dependent manner. Interacts with TMEM39A. Interacts with SACM1L; this interaction is reduced in the absence of TMEM39A. Interacts with kinase FAM20C; transport of FAM20C from the endoplasmic reticulum to the Golgi is likely to be mediated by COPII vesicles.

Its subcellular location is the cytoplasmic vesicle. The protein localises to the COPII-coated vesicle membrane. It is found in the endoplasmic reticulum membrane. The protein resides in the cytoplasm. It localises to the cytosol. Functionally, component of the coat protein complex II (COPII) which promotes the formation of transport vesicles from the endoplasmic reticulum (ER). The coat has two main functions, the physical deformation of the endoplasmic reticulum membrane into vesicles and the selection of cargo molecules for their transport to the Golgi complex. Plays a central role in cargo selection within the COPII complex and together with SEC24B may have a different specificity compared to SEC24C and SEC24D. May package preferentially cargos with cytoplasmic DxE or LxxLE motifs and may also recognize conformational epitopes. This Mus musculus (Mouse) protein is Protein transport protein Sec24A.